The sequence spans 446 residues: MSQKTLFTKSALAVAVALISTQAWSAGFQLNEFSSSGLGRAYSGEGAIADDAGNVSRNPALITMFDRPTFSAGAVYIDPDVNISGTSPSGRSLKADNIAPTAWVPNMHFVAPINDQFGWGASITSNYGLATEFNDTYAGGSVGGTTDLETMNLNLSGAYRLNNAWSFGLGFNAVYARAKIERFAGDLGQLVAGQIMQSPAGQTQQGQALAATANGIDSNTKIAHLNGNQWGFGWNAGILYELDKNNRYALTYRSEVKIDFKGNYSSDLNRAFNNYGLPIPTATGGATQSGYLTLNLPEMWEVSGYNRVDPQWAIHYSLAYTSWSQFQQLKATSTSGDTLFQKHEGFKDAYRIALGTTYYYDDNWTFRTGIAFDDSPVPAQNRSISIPDQDRFWLSAGTTYAFNKDASVDVGVSYMHGQSVKINEGPYQFESEGKAWLFGTNFNYAF.

An N-terminal signal peptide occupies residues 1–25 (MSQKTLFTKSALAVAVALISTQAWS).

The protein belongs to the OmpP1/FadL family. Has been isolated from outer membrane preparation as a homodimer.

Its subcellular location is the cell outer membrane. Functionally, involved in translocation of long-chain fatty acids across the outer membrane. It is a receptor for the bacteriophage T2. FadL may form a specific channel. The chain is Long-chain fatty acid transport protein (fadL) from Escherichia coli (strain K12).